A 640-amino-acid polypeptide reads, in one-letter code: Arogenate dehydrogenase 1, chloroplastic (640 aa).

The transit peptide at 1 to 18 (MAETLITKPPLSLSFTSL) directs the protein to the chloroplast. Prephenate/arogenate dehydrogenase domains follow at residues 53 to 334 (LRIA…GEND) and 365 to 640 (LKIG…LLTS).

This sequence belongs to the prephenate/arogenate dehydrogenase family. As to expression, expressed in roots, stems, leaves, flowers, siliques and seeds. More abundant in seeds.

The protein localises to the plastid. It is found in the chloroplast. It carries out the reaction L-arogenate + NADP(+) = L-tyrosine + CO2 + NADPH. The protein operates within amino-acid biosynthesis; L-tyrosine biosynthesis; L-tyrosine from L-arogenate (NADP(+) route): step 1/1. Its function is as follows. Involved in the biosynthesis of tyrosine. Has no prephenate dehydrogenase activity. This is Arogenate dehydrogenase 1, chloroplastic (TYRAAT1) from Arabidopsis thaliana (Mouse-ear cress).